Consider the following 223-residue polypeptide: Ubiquinone biosynthesis protein COQ4 homolog 2, mitochondrial (223 aa).

The N-terminal 26 residues, 1–26, are a transit peptide targeting the mitochondrion; it reads MFLRRVHPVRLGHAIQRSLTTTKSRN. Residues 21–32 show a composition bias toward low complexity; the sequence is TTKSRNESTTTT. A disordered region spans residues 21–43; that stretch reads TTKSRNESTTTTVEAPQAVPSPP. Zn(2+) contacts are provided by His-177, Asp-178, His-181, and Glu-193.

Belongs to the COQ4 family. Component of a multi-subunit COQ enzyme complex. Zn(2+) is required as a cofactor.

It is found in the mitochondrion inner membrane. It catalyses the reaction a 4-hydroxy-3-methoxy-5-(all-trans-polyprenyl)benzoate + H(+) = a 2-methoxy-6-(all-trans-polyprenyl)phenol + CO2. It functions in the pathway cofactor biosynthesis; ubiquinone biosynthesis. In terms of biological role, lyase that catalyzes the C1-decarboxylation of 4-hydroxy-3-methoxy-5-(all-trans-polyprenyl)benzoic acid into 2-methoxy-6-(all-trans-polyprenyl)phenol during ubiquinone biosynthesis. This chain is Ubiquinone biosynthesis protein COQ4 homolog 2, mitochondrial, found in Culex quinquefasciatus (Southern house mosquito).